A 130-amino-acid polypeptide reads, in one-letter code: uncharacterized protein (130 aa).

This is an uncharacterized protein from Pyrococcus horikoshii (strain ATCC 700860 / DSM 12428 / JCM 9974 / NBRC 100139 / OT-3).